The primary structure comprises 103 residues: Small ribosomal subunit protein uS10 (103 aa).

This sequence belongs to the universal ribosomal protein uS10 family. As to quaternary structure, part of the 30S ribosomal subunit.

Involved in the binding of tRNA to the ribosomes. This is Small ribosomal subunit protein uS10 from Neisseria meningitidis serogroup C / serotype 2a (strain ATCC 700532 / DSM 15464 / FAM18).